Here is a 459-residue protein sequence, read N- to C-terminus: Methionine aminopeptidase 2-1 (459 aa).

Positions 1 to 12 are enriched in basic and acidic residues; the sequence is MGSKSPEDHRQG. Positions 1–79 are disordered; it reads MGSKSPEDHR…RKRNKKKSKK (79 aa). The segment covering 43 to 54 has biased composition (acidic residues); sequence GQDEDGDDDDDE. Residues 67-79 show a composition bias toward basic residues; it reads KKKRKRNKKKSKK. H210 is a binding site for substrate. Residues D231, D242, and H311 each coordinate a divalent metal cation. H319 is a substrate binding site. Residues E344 and E440 each contribute to the a divalent metal cation site.

It belongs to the peptidase M24A family. Methionine aminopeptidase eukaryotic type 2 subfamily. It depends on Co(2+) as a cofactor. Zn(2+) serves as cofactor. Requires Mn(2+) as cofactor. Fe(2+) is required as a cofactor.

The protein resides in the cytoplasm. It carries out the reaction Release of N-terminal amino acids, preferentially methionine, from peptides and arylamides.. In terms of biological role, cotranslationally removes the N-terminal methionine from nascent proteins. The N-terminal methionine is often cleaved when the second residue in the primary sequence is small and uncharged (Met-Ala-, Cys, Gly, Pro, Ser, Thr, or Val). In Pyrenophora tritici-repentis (strain Pt-1C-BFP) (Wheat tan spot fungus), this protein is Methionine aminopeptidase 2-1.